Consider the following 844-residue polypeptide: MQDISNHTPMIQQYLKIKSQYQDILLFYRMGDFYELFFDDAKKAAELLDITLTARGKSNGESIPMAGVPYHAAEAYIAKIVKKGLSIAICEQTGDPNTSKGPVERQVTRIITPATVSEEAFLDNNQDSILVSIFEKNNKYYLAYTSYTQGKIYLVKTLTSLNELKNTVLKLSPQEIITNSRELAQQNPFKKPIKALEEWYYSNFEAKKYINDSLDTNIANNILNLYKNDKLTTIGSILSYLTNILKDTPRHITDISYEQEQDTLNIDINSRINLELDNNSKSSLLSIIGKCKTSLGSRLLKRYFSNPTRNLNILATRHSIINSLGENQHFLKIQDVLSYISDIERIISRVALGTVKPKDLVALRDSLEQLPILKKLLSEKNTPEITNINNRIHQLDELVTLLDKAIIENPPTTIRDGGVIKEGFDKELDELKSIKDNSYDFLIKFEELQKQKTGISTLKVGYNRVHGYYIELSKQHADKIPTEYVRRQTLKASERYITEELKNFEDKVLSSKEKALAREKLIYDTLLKKVIEYYKQIQETAASIAEIDVLANFAERAIKLKLSQPKFNNLAKLELKEVRHLAIEHNIDEPFIPNDTLLSKDTNTLQIITGPNMGGKSTYMRQVAQLIFLAYIGSFVPASYADICDIDTIYTRIGASDDISSGRSTFMVEMTETAYILNNASAKSLVIMDEIGRGTSTFDGLALAKACAEKFAQIGAFTLFATHYFELTELAKQYPNVCNIHFEAKEYKDNIYFMHKAVTGAAKKSYGIQVAKLAGISQDVLESAKQNLYNLEKKQQLTESTQVQAQFQLEPTTQNPLQQKLDAIDINTITPLEALNILFELKKR.

610–617 (GPNMGGKS) is an ATP binding site.

It belongs to the DNA mismatch repair MutS family.

Its function is as follows. This protein is involved in the repair of mismatches in DNA. It is possible that it carries out the mismatch recognition step. This protein has a weak ATPase activity. This chain is DNA mismatch repair protein MutS, found in Francisella tularensis subsp. mediasiatica (strain FSC147).